A 197-amino-acid chain; its full sequence is Imidazoleglycerol-phosphate dehydratase (197 aa).

The protein belongs to the imidazoleglycerol-phosphate dehydratase family.

Its subcellular location is the cytoplasm. It carries out the reaction D-erythro-1-(imidazol-4-yl)glycerol 3-phosphate = 3-(imidazol-4-yl)-2-oxopropyl phosphate + H2O. It functions in the pathway amino-acid biosynthesis; L-histidine biosynthesis; L-histidine from 5-phospho-alpha-D-ribose 1-diphosphate: step 6/9. This Methanocaldococcus jannaschii (strain ATCC 43067 / DSM 2661 / JAL-1 / JCM 10045 / NBRC 100440) (Methanococcus jannaschii) protein is Imidazoleglycerol-phosphate dehydratase.